Consider the following 354-residue polypeptide: GTPase Obg (354 aa).

The 159-residue stretch at 1-159 folds into the Obg domain; sequence MQFIDHAEIE…KQLRLELKLL (159 aa). Residues 160–328 enclose the OBG-type G domain; that stretch reads AEVGIIGLPN…LLQEIWDVLD (169 aa). GTP contacts are provided by residues 166–173, 191–195, 213–216, 280–283, and 309–311; these read GLPNAGKS, FTTLI, DIPG, NKLD, and SAV. Mg(2+) is bound by residues Ser-173 and Thr-193.

Belongs to the TRAFAC class OBG-HflX-like GTPase superfamily. OBG GTPase family. Monomer. Mg(2+) is required as a cofactor.

It is found in the cytoplasm. In terms of biological role, an essential GTPase which binds GTP, GDP and possibly (p)ppGpp with moderate affinity, with high nucleotide exchange rates and a fairly low GTP hydrolysis rate. Plays a role in control of the cell cycle, stress response, ribosome biogenesis and in those bacteria that undergo differentiation, in morphogenesis control. This Picosynechococcus sp. (strain ATCC 27264 / PCC 7002 / PR-6) (Agmenellum quadruplicatum) protein is GTPase Obg.